We begin with the raw amino-acid sequence, 440 residues long: Protein naked cuticle homolog 1 (440 aa).

Glycine 2 is lipidated: N-myristoyl glycine. The EF-hand domain occupies 129–164 (EEDNRQEWTFTLYDFDNNGKVTREDITSLLHTIYEV). The Ca(2+) site is built by aspartate 142, aspartate 144, asparagine 146, lysine 148, and aspartate 153. The segment covering 192–204 (RWKNCTQTNTDTP) has biased composition (polar residues). Disordered stretches follow at residues 192–221 (RWKN…KTSE), 272–379 (AAPA…QRPK), and 421–440 (RHEH…FYQS). The span at 211 to 221 (EKCIEDSKTSE) shows a compositional bias: basic and acidic residues. Over residues 272-293 (AAPATEPAKPTHATRSSNQSRS) the composition is skewed to low complexity. Basic residues predominate over residues 324–336 (RHTHALRSPKTHR). Residues 352–362 (APPPPSVPNQT) are compositionally biased toward pro residues. Residues 422-440 (HEHHHHHEHHHHYHHFYQS) show a composition bias toward basic residues.

This sequence belongs to the NKD family.

Its subcellular location is the cell membrane. The protein localises to the cytoplasm. Cell autonomous antagonist of the canonical Wnt signaling pathway. May activate a second Wnt signaling pathway that controls planar cell polarity. The chain is Protein naked cuticle homolog 1 (nkd1) from Danio rerio (Zebrafish).